A 217-amino-acid polypeptide reads, in one-letter code: uncharacterized protein (217 aa).

A run of 4 helical transmembrane segments spans residues 9-29, 54-74, 103-125, and 135-157; these read ISLA…LSTI, FLST…LLEL, LMAY…RFLS, and IVFW…ASYI.

Belongs to the DP1 family.

It localises to the endoplasmic reticulum membrane. This is an uncharacterized protein from Schizosaccharomyces pombe (strain 972 / ATCC 24843) (Fission yeast).